Reading from the N-terminus, the 242-residue chain is Probable 2-phosphosulfolactate phosphatase (242 aa).

The protein belongs to the ComB family. Mg(2+) serves as cofactor.

It catalyses the reaction (2R)-O-phospho-3-sulfolactate + H2O = (2R)-3-sulfolactate + phosphate. In Synechococcus sp. (strain JA-2-3B'a(2-13)) (Cyanobacteria bacterium Yellowstone B-Prime), this protein is Probable 2-phosphosulfolactate phosphatase.